A 749-amino-acid chain; its full sequence is Fibronectin type III and SPRY domain-containing protein 2 (749 aa).

Residues 205 to 317 are a coiled coil; it reads LNEALESAKD…TIEEMCHEEK (113 aa). Fibronectin type-III domains lie at 375–470 and 471–564; these read PVIN…TAPS and PPII…TIGS. The region spanning 546–744 is the B30.2/SPRY domain; the sequence is NMGGPSVRSE…KVHNGISMPK (199 aa).

In terms of assembly, interacts with CMYA5. In cardiac muscles, identified in a complex composed of FSD2, CMYA5 and RYR2.

It is found in the nucleus. The protein localises to the sarcoplasmic reticulum. Its subcellular location is the cytoplasm. The protein resides in the perinuclear region. The polypeptide is Fibronectin type III and SPRY domain-containing protein 2 (FSD2) (Homo sapiens (Human)).